A 244-amino-acid chain; its full sequence is Phosphoadenosine 5'-phosphosulfate reductase (244 aa).

Catalysis depends on Cys239, which acts as the Nucleophile; cysteine thiosulfonate intermediate.

The protein belongs to the PAPS reductase family. CysH subfamily.

It is found in the cytoplasm. It carries out the reaction [thioredoxin]-disulfide + sulfite + adenosine 3',5'-bisphosphate + 2 H(+) = [thioredoxin]-dithiol + 3'-phosphoadenylyl sulfate. Its pathway is sulfur metabolism; hydrogen sulfide biosynthesis; sulfite from sulfate: step 3/3. Functionally, catalyzes the formation of sulfite from phosphoadenosine 5'-phosphosulfate (PAPS) using thioredoxin as an electron donor. In Klebsiella pneumoniae subsp. pneumoniae (strain ATCC 700721 / MGH 78578), this protein is Phosphoadenosine 5'-phosphosulfate reductase.